The chain runs to 284 residues: Formamidopyrimidine-DNA glycosylase (284 aa).

Pro-2 functions as the Schiff-base intermediate with DNA in the catalytic mechanism. Glu-3 functions as the Proton donor in the catalytic mechanism. The active-site Proton donor; for beta-elimination activity is Lys-59. Residues His-94 and Arg-113 each contribute to the DNA site. Residues Lys-239–Lys-273 form an FPG-type zinc finger. Arg-263 (proton donor; for delta-elimination activity) is an active-site residue.

This sequence belongs to the FPG family. Monomer. Zn(2+) is required as a cofactor.

It carries out the reaction Hydrolysis of DNA containing ring-opened 7-methylguanine residues, releasing 2,6-diamino-4-hydroxy-5-(N-methyl)formamidopyrimidine.. It catalyses the reaction 2'-deoxyribonucleotide-(2'-deoxyribose 5'-phosphate)-2'-deoxyribonucleotide-DNA = a 3'-end 2'-deoxyribonucleotide-(2,3-dehydro-2,3-deoxyribose 5'-phosphate)-DNA + a 5'-end 5'-phospho-2'-deoxyribonucleoside-DNA + H(+). Functionally, involved in base excision repair of DNA damaged by oxidation or by mutagenic agents. Acts as a DNA glycosylase that recognizes and removes damaged bases. Has a preference for oxidized purines, such as 7,8-dihydro-8-oxoguanine (8-oxoG). Has AP (apurinic/apyrimidinic) lyase activity and introduces nicks in the DNA strand. Cleaves the DNA backbone by beta-delta elimination to generate a single-strand break at the site of the removed base with both 3'- and 5'-phosphates. This Mycoplasma genitalium (strain ATCC 33530 / DSM 19775 / NCTC 10195 / G37) (Mycoplasmoides genitalium) protein is Formamidopyrimidine-DNA glycosylase (mutM).